Reading from the N-terminus, the 107-residue chain is Putative pterin-4-alpha-carbinolamine dehydratase (107 aa).

It belongs to the pterin-4-alpha-carbinolamine dehydratase family.

The catalysed reaction is (4aS,6R)-4a-hydroxy-L-erythro-5,6,7,8-tetrahydrobiopterin = (6R)-L-erythro-6,7-dihydrobiopterin + H2O. The sequence is that of Putative pterin-4-alpha-carbinolamine dehydratase from Paracoccus denitrificans (strain Pd 1222).